The sequence spans 338 residues: Solute carrier family 35 member G5 (338 aa).

The tract at residues 1–21 (MAGSHPYFNLPDSTHPSPPSA) is disordered. Transmembrane regions (helical) follow at residues 37-57 (TNGLLVALLGGGLPAGFVGPL), 67-87 (LPSLELLICRCLFHLPIALPL), 105-125 (CFCALLNVLSIGCAYSAVQVV), 160-180 (CGLLGSILGLIIIVGPGLWTL), 190-210 (ALGYVQAFLGGLALSLGLLVY), 221-241 (TVAFLSGLVGLLGSVPGLFVL), 250-270 (LLSWSCVGAVGILALVSFTCV), 281-301 (LVCAVLHSEVVVALILQYYVL), and 305-325 (VAPSDIMGAGIVLGSIAIITA). In terms of domain architecture, EamA 1 spans 49–174 (LPAGFVGPLS…SILGLIIIVG (126 aa)). Residues 272–325 (YAVTKAHPALVCAVLHSEVVVALILQYYVLHETVAPSDIMGAGIVLGSIAIITA) form the EamA 2 domain.

The protein belongs to the SLC35G solute transporter family.

The protein localises to the membrane. In Pan troglodytes (Chimpanzee), this protein is Solute carrier family 35 member G5 (SLC35G5).